A 271-amino-acid polypeptide reads, in one-letter code: Cell division protein FtsQ (271 aa).

Residues 1–37 are disordered; sequence MAAGPTTAEKSGASGAKRSSKGSSDGPSRPGTRNRKF. Topologically, residues 1-43 are cytoplasmic; the sequence is MAAGPTTAEKSGASGAKRSSKGSSDGPSRPGTRNRKFRMPGTR. Residues 8–24 are compositionally biased toward low complexity; that stretch reads AEKSGASGAKRSSKGSS. Residues 44-64 form a helical membrane-spanning segment; the sequence is ALLITLGVLLLVAGGLWALYG. The Extracellular portion of the chain corresponds to 65–271; it reads STWFRVERVK…APTAPASSGS (207 aa). The region spanning 68-137 is the POTRA domain; the sequence is FRVERVKTSG…HGIGLKVTER (70 aa).

Belongs to the FtsQ/DivIB family. FtsQ subfamily.

The protein localises to the cell membrane. In terms of biological role, essential cell division protein. This is Cell division protein FtsQ from Streptomyces venezuelae (strain ATCC 10712 / CBS 650.69 / DSM 40230 / JCM 4526 / NBRC 13096 / PD 04745).